We begin with the raw amino-acid sequence, 428 residues long: UDP-N-acetylglucosamine 1-carboxyvinyltransferase (428 aa).

A phosphoenolpyruvate-binding site is contributed by Lys25–Asn26. Arg102 is a UDP-N-acetyl-alpha-D-glucosamine binding site. Cys126 serves as the catalytic Proton donor. Residue Cys126 is modified to 2-(S-cysteinyl)pyruvic acid O-phosphothioketal. Asp316 and Val338 together coordinate UDP-N-acetyl-alpha-D-glucosamine.

It belongs to the EPSP synthase family. MurA subfamily.

The protein localises to the cytoplasm. It catalyses the reaction phosphoenolpyruvate + UDP-N-acetyl-alpha-D-glucosamine = UDP-N-acetyl-3-O-(1-carboxyvinyl)-alpha-D-glucosamine + phosphate. It functions in the pathway cell wall biogenesis; peptidoglycan biosynthesis. Cell wall formation. Adds enolpyruvyl to UDP-N-acetylglucosamine. This Anaplasma marginale (strain Florida) protein is UDP-N-acetylglucosamine 1-carboxyvinyltransferase.